An 88-amino-acid chain; its full sequence is Small ribosomal subunit protein bS20 (88 aa).

The span at 1-23 (MPNTKSAEKALRVADANRQENRR) shows a compositional bias: basic and acidic residues. Disordered regions lie at residues 1–28 (MPNT…KSQV) and 69–88 (PKNA…QAAK). Residues 71–81 (NAARRKSRLMK) are compositionally biased toward basic residues.

It belongs to the bacterial ribosomal protein bS20 family.

In terms of biological role, binds directly to 16S ribosomal RNA. In Dehalococcoides mccartyi (strain ATCC BAA-2266 / KCTC 15142 / 195) (Dehalococcoides ethenogenes (strain 195)), this protein is Small ribosomal subunit protein bS20.